The sequence spans 602 residues: Sodium-independent sulfate anion transporter (602 aa).

The Extracellular portion of the chain corresponds to 1–47 (MSPPMSPMKPPKGFAPMSCCWSTETMQKWLPFLGWLPDYTWYALKMD). A helical membrane pass occupies residues 48–68 (FIAGISVGLTVIPQALAYAEV). Position 69 (A69) is a topological domain, cytoplasmic. The helical transmembrane segment at 70 to 90 (GLPPQYGLYSAFMGCFVYFFL) threads the bilayer. The Extracellular portion of the chain corresponds to 91–115 (GTSRDVTLGPTAIMSLLVSFYTFHE). Residues 116-136 (PAYAVLLAFLTGCIQLGMGFL) form a helical membrane-spanning segment. The Cytoplasmic portion of the chain corresponds to 137-143 (RLGLLLD). A helical transmembrane segment spans residues 144 to 164 (FISCPVIKGFTSAAAIIIGFG). Residues 165–193 (QIKNLLGLQHIPRQFFLQVYYTFHNIGET) are Extracellular-facing. Residues 194 to 214 (RVGDAVLGLVCMVLLLVLKLM) form a helical membrane-spanning segment. The Cytoplasmic segment spans residues 215 to 246 (RDHVPPVHPEMPTGVRLSHGLVWTATTARNAL). The helical transmembrane segment at 247–267 (VVSFAALVAYSFQVTGYQPFV) threads the bilayer. At 268-300 (LTGKTPEGLPDAHIPPFSVTTANGTISFTEMVQ) the chain is on the extracellular side. A helical transmembrane segment spans residues 301–321 (GMGAGLVVVPLMGLLESIAVA). At 322-337 (KSFASQNNYRINSNQE) the chain is on the cytoplasmic side. A helical membrane pass occupies residues 338–358 (LLALGFTNILGSLFSSYPVTG). The Extracellular portion of the chain corresponds to 359–370 (SFGRTAVNAQSG). A helical membrane pass occupies residues 371-391 (VCTPAGGLMTGALVLLSLDYL). Topologically, residues 392-394 (TSL) are cytoplasmic. Residues 395-415 (FYYIPKSALAAVIIMAVVPLF) traverse the membrane as a helical segment. Over 416–438 (DTKIVKTLWRVKRLDLLPLCVTF) the chain is Extracellular. A helical transmembrane segment spans residues 439–459 (LLCFWEVQYGILAGTLVSVLI). The Cytoplasmic portion of the chain corresponds to 460–602 (LLHSVARPKI…PEHKIALLKA (143 aa)). Residues 466–580 (RPKIQVSEGP…EAEKYLKQEP (115 aa)) enclose the STAS domain.

The protein belongs to the SLC26A/SulP transporter (TC 2.A.53) family.

The protein resides in the cell membrane. It is found in the lysosome membrane. The protein localises to the apical cell membrane. Its subcellular location is the basolateral cell membrane. It carries out the reaction hydrogencarbonate(in) + chloride(out) = hydrogencarbonate(out) + chloride(in). The catalysed reaction is sulfate(in) + H(+)(in) = sulfate(out) + H(+)(out). It catalyses the reaction oxalate(in) + chloride(out) = oxalate(out) + chloride(in). In terms of biological role, sodium-independent anion exchanger mediating bicarbonate, chloride, sulfate and oxalate transport. Exhibits sodium-independent sulfate anion transporter activity that may cooperate with SLC26A2 to mediate DIDS-sensitive sulfate uptake into high endothelial venules endothelial cells (HEVEC). In the kidney, mediates chloride-bicarbonate exchange, facilitating V-ATPase-mediated acid secretion. May function as a chloride channel, playing an important role in moderating chloride homeostasis and neuronal activity in the cerebellum. This chain is Sodium-independent sulfate anion transporter, found in Bos taurus (Bovine).